Reading from the N-terminus, the 221-residue chain is Deoxyribose-phosphate aldolase (221 aa).

Asp91 serves as the catalytic Proton donor/acceptor. The active-site Schiff-base intermediate with acetaldehyde is the Lys153. Residue Lys182 is the Proton donor/acceptor of the active site.

It belongs to the DeoC/FbaB aldolase family. DeoC type 1 subfamily.

The protein resides in the cytoplasm. The catalysed reaction is 2-deoxy-D-ribose 5-phosphate = D-glyceraldehyde 3-phosphate + acetaldehyde. The protein operates within carbohydrate degradation; 2-deoxy-D-ribose 1-phosphate degradation; D-glyceraldehyde 3-phosphate and acetaldehyde from 2-deoxy-alpha-D-ribose 1-phosphate: step 2/2. Its function is as follows. Catalyzes a reversible aldol reaction between acetaldehyde and D-glyceraldehyde 3-phosphate to generate 2-deoxy-D-ribose 5-phosphate. This Clostridium botulinum (strain Eklund 17B / Type B) protein is Deoxyribose-phosphate aldolase.